The sequence spans 251 residues: Ubiquinone/menaquinone biosynthesis C-methyltransferase UbiE (251 aa).

S-adenosyl-L-methionine-binding positions include Thr-74, Asp-95, and 123 to 124 (NA).

The protein belongs to the class I-like SAM-binding methyltransferase superfamily. MenG/UbiE family.

The enzyme catalyses a 2-demethylmenaquinol + S-adenosyl-L-methionine = a menaquinol + S-adenosyl-L-homocysteine + H(+). It carries out the reaction a 2-methoxy-6-(all-trans-polyprenyl)benzene-1,4-diol + S-adenosyl-L-methionine = a 5-methoxy-2-methyl-3-(all-trans-polyprenyl)benzene-1,4-diol + S-adenosyl-L-homocysteine + H(+). Its pathway is quinol/quinone metabolism; menaquinone biosynthesis; menaquinol from 1,4-dihydroxy-2-naphthoate: step 2/2. It participates in cofactor biosynthesis; ubiquinone biosynthesis. Its function is as follows. Methyltransferase required for the conversion of demethylmenaquinol (DMKH2) to menaquinol (MKH2) and the conversion of 2-polyprenyl-6-methoxy-1,4-benzoquinol (DDMQH2) to 2-polyprenyl-3-methyl-6-methoxy-1,4-benzoquinol (DMQH2). The protein is Ubiquinone/menaquinone biosynthesis C-methyltransferase UbiE of Shewanella baltica (strain OS155 / ATCC BAA-1091).